The chain runs to 323 residues: AA9 family lytic polysaccharide monooxygenase B (323 aa).

The N-terminal stretch at 1 to 18 (MKSFTLTTLAALAGNAAA) is a signal peptide. Cu(2+) contacts are provided by His19 and His97. Cysteines 56 and 191 form a disulfide. The O2 site is built by His177 and Gln186. Residue Tyr188 participates in Cu(2+) binding. The CBM1 domain maps to 286–323 (CTVQKYQQCGGQGYTGCTNCASGSTCSAVSPPYYSQCV).

This sequence belongs to the polysaccharide monooxygenase AA9 family. The cofactor is Cu(2+).

It localises to the secreted. It catalyses the reaction [(1-&gt;4)-beta-D-glucosyl]n+m + reduced acceptor + O2 = 4-dehydro-beta-D-glucosyl-[(1-&gt;4)-beta-D-glucosyl]n-1 + [(1-&gt;4)-beta-D-glucosyl]m + acceptor + H2O.. With respect to regulation, is able to utilize various natural phenolic compounds as reducing agents. Most of these reducing agents are present in plants, either free or as lignin building blocks, such as sinapic acid, or as flavonoids such as catechin and dopamine. Phenolic compounds with 1,2-benzenediol and 1,2,3-benzenetriol moieties yield the highest release of oxidized and non-oxidized glucooligosaccharides from cellulose compared to monophenols or sulfur-containing compounds. Lytic polysaccharide monooxygenase (LPMO) that depolymerizes crystalline and amorphous polysaccharides via the oxidation of scissile alpha- or beta-(1-4)-glycosidic bonds, yielding C1 oxidation products. Catalysis by LPMOs requires the reduction of the active-site copper from Cu(II) to Cu(I) by a reducing agent and H(2)O(2) or O(2) as a cosubstrate. Is active on regenerated amorphous cellulose (RAC). The chain is AA9 family lytic polysaccharide monooxygenase B from Thermothelomyces thermophilus (strain ATCC 42464 / BCRC 31852 / DSM 1799) (Sporotrichum thermophile).